The following is a 394-amino-acid chain: Chaperone protein DnaJ (394 aa).

Residues D6–G71 form the J domain. Residues G152–E234 form a CR-type zinc finger. C165, C168, C182, C185, C208, C211, C222, and C225 together coordinate Zn(2+). 4 CXXCXGXG motif repeats span residues C165–G172, C182–G189, C208–G215, and C222–G229.

This sequence belongs to the DnaJ family. Homodimer. Zn(2+) is required as a cofactor.

The protein localises to the cytoplasm. Its function is as follows. Participates actively in the response to hyperosmotic and heat shock by preventing the aggregation of stress-denatured proteins and by disaggregating proteins, also in an autonomous, DnaK-independent fashion. Unfolded proteins bind initially to DnaJ; upon interaction with the DnaJ-bound protein, DnaK hydrolyzes its bound ATP, resulting in the formation of a stable complex. GrpE releases ADP from DnaK; ATP binding to DnaK triggers the release of the substrate protein, thus completing the reaction cycle. Several rounds of ATP-dependent interactions between DnaJ, DnaK and GrpE are required for fully efficient folding. Also involved, together with DnaK and GrpE, in the DNA replication of plasmids through activation of initiation proteins. This is Chaperone protein DnaJ from Bacteroides fragilis (strain YCH46).